The chain runs to 630 residues: Threonine--tRNA ligase (630 aa).

Residues 1–137 (MKVLLIHSDY…PLSELSRKIT (137 aa)) form an editing domain region. The interval 207-506 (PHVKFITEKE…ADAGAPPMLP (300 aa)) is catalytic. Positions 299, 351, and 475 each coordinate Zn(2+).

The protein belongs to the class-II aminoacyl-tRNA synthetase family. In terms of assembly, homodimer. The cofactor is Zn(2+).

The protein localises to the cytoplasm. The enzyme catalyses tRNA(Thr) + L-threonine + ATP = L-threonyl-tRNA(Thr) + AMP + diphosphate + H(+). Functionally, catalyzes the attachment of threonine to tRNA(Thr) in a two-step reaction: L-threonine is first activated by ATP to form Thr-AMP and then transferred to the acceptor end of tRNA(Thr). Also edits incorrectly charged L-seryl-tRNA(Thr). This Methanococcus aeolicus (strain ATCC BAA-1280 / DSM 17508 / OCM 812 / Nankai-3) protein is Threonine--tRNA ligase.